We begin with the raw amino-acid sequence, 1488 residues long: DNA polymerase alpha catalytic subunit (1488 aa).

Disordered regions lie at residues 1–22, 79–124, and 236–325; these read MSESPSEPRAKRQRVDKNGRFA, LRDF…TGKA, and FFSS…ESED. The segment covering 83 to 93 has biased composition (acidic residues); that stretch reads FEDEDEYSDGE. Positions 96-103 match the Nuclear localization signal motif; sequence RKDSKKKK. A compositionally biased stretch (basic residues) spans 99–113; the sequence is SKKKKGVAPNSKKRP. Ser-239 is subject to Phosphoserine. The segment covering 242–258 has biased composition (basic and acidic residues); the sequence is IKKEPMPEKTPAKKATE. Residues 260-278 show a composition bias toward acidic residues; that stretch reads PFSDNEMDFSCLDDDENQF. 2 positions are modified to phosphoserine: Ser-262 and Ser-269. A compositionally biased stretch (polar residues) spans 286–303; that stretch reads TEKVSQTKTAAEKTSQSK. The span at 304–325 shows a compositional bias: basic and acidic residues; it reads VAEKSAPKKETTGSPKESESED. Thr-314 carries the phosphothreonine modification. Ser-317 bears the Phosphoserine mark. Residues 638 to 758 are contains conserved residues essential for 3' -&gt; 5' exonuclease activities; sequence DSERALLSWF…DLLEMYEKGE (121 aa). 2 DNA-binding regions span residues 675–734 and 1255–1380; these read QIVA…CKQV and PTKF…RKKS. Positions 1296, 1299, 1324, 1329, 1362, 1367, 1385, and 1388 each coordinate Zn(2+). A CysA-type zinc finger spans residues 1296-1327; the sequence is CVTCKTEQLMASAYRPGPSNSHIAVLQQCAKS. The short motif at 1362–1388 is the CysB motif element; sequence CDHPDCNFNTRTHSLRKKSHRPLCQKC.

The protein belongs to the DNA polymerase type-B family. In terms of assembly, component of the alpha DNA polymerase complex (also known as the alpha DNA polymerase-primase complex) consisting of four subunits: the catalytic subunit PolA1, the regulatory subunit PolA2, and the primase complex subunits Prim1 and Prim2 respectively. PolA1 associates with the DNA primase complex before association with PolA2. Interacts with Dpit47; the interaction inhibits the activity of the DNA polymerase and occurs only in proliferating cells but not in quiescent cells. In embryos, a cleaved form of 130 kDa is produced up to cycle 14 and then disappears. Expressed in embryos (at protein level).

Its subcellular location is the nucleus. The enzyme catalyses DNA(n) + a 2'-deoxyribonucleoside 5'-triphosphate = DNA(n+1) + diphosphate. With respect to regulation, inhibited by N2-(p-n-butylphenyl) deoxyguanosine 5'-triphosphate and N2-(p-n-butylphenyl) deoxyadenosine 5'-triphosphate. DNA synthesis is not inhibited by fungal toxin alpha-amaitin. The 3'-5' exonuclease activity is inhibited by 10mM dGMP. In terms of biological role, catalytic subunit of the DNA polymerase alpha complex (also known as the alpha DNA polymerase-primase complex) which plays an essential role in the initiation of DNA synthesis. During the S phase of the cell cycle, the DNA polymerase alpha complex (composed of a catalytic subunit PolA1, an accessory subunit PolA2 and two primase subunits, the catalytic subunit Prim1 and the regulatory subunit Prim2) is recruited to DNA at the replicative forks. The primase subunit of the polymerase alpha complex initiates DNA synthesis by oligomerising short RNA primers on both leading and lagging strands. These primers are initially extended by the polymerase alpha catalytic subunit and subsequently transferred to polymerase delta and polymerase epsilon for processive synthesis on the lagging and leading strand, respectively. In addition to polymerase activity, exhibits 3' to 5' exonuclease activity. In Drosophila melanogaster (Fruit fly), this protein is DNA polymerase alpha catalytic subunit.